We begin with the raw amino-acid sequence, 100 residues long: Mini zinc finger protein 2 (100 aa).

The tract at residues 1–26 (MRKRQVVLRRASPEEPSRSSSTASSL) is disordered. The ZF-HD dimerization-type; degenerate zinc finger occupies 33 to 83 (YGECQKNHAAAVGGYAVDGCREFMASRGEEGTVAALTCAACGCHRSFHRRE).

As to quaternary structure, homo- and heterodimers. Interacts with ZHD1, ZHD3, ZHD5, ZHD8, ZHD10 and ZHD13. Mostly expressed in stems, flowers and siliques, and, to a lower extent, in inflorescence.

Its subcellular location is the cytoplasm. Inhibits zinc finger homeodomain (ZHD) transcription factors by interacting with them to prevent both their nuclear localization and their DNA-binding properties. Involved in integrating signals from multiple hormones by regulating the expression of specific genes. The protein is Mini zinc finger protein 2 (MIF2) of Arabidopsis thaliana (Mouse-ear cress).